The sequence spans 226 residues: Probable proteasome subunit beta type-1 (226 aa).

Positions 1–24 (MATTVKDTMNVDINAIKKGEIRMG) are cleaved as a propeptide — removed in mature form. Catalysis depends on Thr25, which acts as the Nucleophile.

The protein belongs to the peptidase T1B family. As to quaternary structure, the 26S proteasome consists of a 20S proteasome core and two 19S regulatory subunits. The 20S proteasome core is composed of 28 subunits that are arranged in four stacked rings, resulting in a barrel-shaped structure. The two end rings are each formed by seven alpha subunits, and the two central rings are each formed by seven beta subunits. The catalytic chamber with the active sites is on the inside of the barrel.

It is found in the cytoplasm. Its subcellular location is the nucleus. It catalyses the reaction Cleavage of peptide bonds with very broad specificity.. In terms of biological role, the proteasome is a multicatalytic proteinase complex which is characterized by its ability to cleave peptides with Arg, Phe, Tyr, Leu, and Glu adjacent to the leaving group at neutral or slightly basic pH. The proteasome has an ATP-dependent proteolytic activity. The protein is Probable proteasome subunit beta type-1 (pre3) of Schizosaccharomyces pombe (strain 972 / ATCC 24843) (Fission yeast).